Here is a 140-residue protein sequence, read N- to C-terminus: Active regulator of SIRT1 (140 aa).

2 disordered regions span residues 1-52 (MSAS…KNKA) and 95-123 (QQVL…EGTV). Positions 108–120 (DRPAEKKEKKKPE) are enriched in basic and acidic residues.

The protein belongs to the AROS family. In terms of assembly, part of the small subunit (SSU) processome, composed of more than 70 proteins and the RNA chaperone small nucleolar RNA (snoRNA) U3.

Its subcellular location is the nucleus. The protein resides in the nucleolus. Functionally, part of the small subunit (SSU) processome, first precursor of the small eukaryotic ribosomal subunit. During the assembly of the SSU processome in the nucleolus, many ribosome biogenesis factors, an RNA chaperone and ribosomal proteins associate with the nascent pre-rRNA and work in concert to generate RNA folding, modifications, rearrangements and cleavage as well as targeted degradation of pre-ribosomal RNA by the RNA exosome. Acts as a chaperone that specifically mediates the integration of RPS19 in state post-A1. Direct regulator of SIRT1. In Gallus gallus (Chicken), this protein is Active regulator of SIRT1 (RPS19BP1).